Reading from the N-terminus, the 186-residue chain is Ribosome-recycling factor (186 aa).

This sequence belongs to the RRF family.

It is found in the cytoplasm. Functionally, responsible for the release of ribosomes from messenger RNA at the termination of protein biosynthesis. May increase the efficiency of translation by recycling ribosomes from one round of translation to another. This chain is Ribosome-recycling factor, found in Bartonella tribocorum (strain CIP 105476 / IBS 506).